The chain runs to 345 residues: BAG family molecular chaperone regulator 1 (345 aa).

The disordered stretch occupies residues 1 to 137; sequence MAQRGGARRP…STRSEEVTRE (137 aa). Residues 68–80 are compositionally biased toward basic residues; the sequence is RRPRMKKKTRRRS. The span at 81-91 shows a compositional bias: basic and acidic residues; that stretch reads TRSEELTRSEE. The span at 95–114 shows a compositional bias: low complexity; the sequence is SEEATWSEEATQSEEATQGE. Repeat copies occupy residues 96–101, 102–107, 108–113, 114–119, 120–125, 126–131, and 132–137. The segment at 96-137 is 7 X 6 AA tandem repeat of E-E-X(4); that stretch reads EEATWSEEATQSEEATQGEEMNRSQEVTRDEESTRSEEVTRE. A compositionally biased stretch (basic and acidic residues) spans 115–137; that stretch reads EMNRSQEVTRDEESTRSEEVTRE. Positions 144 to 224 constitute a Ubiquitin-like domain; the sequence is LTVTVTHSNE…VMLIGKKNSP (81 aa). The segment at 172–219 is interaction with HSPA8; it reads DLAQVVEEVIGVPQSFQKLIFKGKSLKEMETPLSALGIQDGCRVMLIG. The segment at 216 to 345 is interaction with PPP1R15A; it reads MLIGKKNSPQ…LQSTNFALAE (130 aa). S223 carries the post-translational modification Phosphoserine. The 81-residue stretch at 246 to 326 folds into the BAG domain; that stretch reads QLEELNKELT…AFLAECDTVE (81 aa).

In terms of assembly, homodimer. Forms a heteromeric complex with HSP70/HSC70. Binds to the ATPase domain of HSP/HSC70 chaperones. Isoform 1, isoform 3 and isoform 4 but not isoform 2 interact with HSPA8/HSC70. Interacts with NR3C1. Interacts with the N-terminal region of MAPRE2. Interacts with PPP1R15A. Interacts with BCL2 in an ATP-dependent manner. Isoform 2 does not interact with BCL2. Interacts with SIAH1. Interacts with HSPA8 (via NBD). Interacts with HSPA1A (via NBD) and HSPA1B (via NBD). Interacts with SIAH2. Interacts with ESR1; the interaction is promoted in the absence of estradiol (17-beta-estradiol/E2). Ubiquitinated; mediated by SIAH1 or SIAH2 and leading to its subsequent proteasomal degradation. In terms of tissue distribution, isoform 4 is the most abundantly expressed isoform. It is ubiquitously expressed throughout most tissues, except the liver, colon, breast and uterine myometrium. Isoform 1 is expressed in the ovary and testis. Isoform 4 is expressed in several types of tumor cell lines, and at consistently high levels in leukemia and lymphoma cell lines. Isoform 1 is expressed in the prostate, breast and leukemia cell lines. Isoform 3 is the least abundant isoform in tumor cell lines (at protein level).

Its subcellular location is the nucleus. The protein localises to the cytoplasm. Functionally, co-chaperone for HSP70 and HSC70 chaperone proteins. Acts as a nucleotide-exchange factor (NEF) promoting the release of ADP from the HSP70 and HSC70 proteins thereby triggering client/substrate protein release. Nucleotide release is mediated via its binding to the nucleotide-binding domain (NBD) of HSPA8/HSC70 where as the substrate release is mediated via its binding to the substrate-binding domain (SBD) of HSPA8/HSC70. Inhibits the pro-apoptotic function of PPP1R15A, and has anti-apoptotic activity. Markedly increases the anti-cell death function of BCL2 induced by various stimuli. Involved in the STUB1-mediated proteasomal degradation of ESR1 in response to age-related circulating estradiol (17-beta-estradiol/E2) decline, thereby promotes neuronal apoptosis in response to ischemic reperfusion injury. In Homo sapiens (Human), this protein is BAG family molecular chaperone regulator 1 (BAG1).